Reading from the N-terminus, the 622-residue chain is Chromosomal replication initiator protein DnaA (622 aa).

Positions 1–99 (MADVPADLAA…SAGEPPAPPA (99 aa)) are domain I, interacts with DnaA modulators. Residues 88–282 (DDSAGEPPAP…APGPGEPHAR (195 aa)) form a disordered region. The tract at residues 100–281 (PPMHQSHQGP…PAPGPGEPHA (182 aa)) is domain II. Composition is skewed to basic and acidic residues over residues 118-137 (QRDD…RPSD) and 176-210 (GYQD…EPWR). Residues 250–262 (PGGHGPGRTGGSV) show a composition bias toward gly residues. The interval 282-498 (RLNPKYLFDT…GALIRVTAFA (217 aa)) is domain III, AAA+ region. Positions 326, 328, 329, and 330 each coordinate ATP. A domain IV, binds dsDNA region spans residues 499 to 622 (SLNRQPVDLG…TELTNRIKNG (124 aa)).

This sequence belongs to the DnaA family. As to quaternary structure, oligomerizes as a right-handed, spiral filament on DNA at oriC.

The protein localises to the cytoplasm. Plays an essential role in the initiation and regulation of chromosomal replication. ATP-DnaA binds to the origin of replication (oriC) to initiate formation of the DNA replication initiation complex once per cell cycle. Binds the DnaA box (a 9 base pair repeat at the origin) and separates the double-stranded (ds)DNA. Forms a right-handed helical filament on oriC DNA; dsDNA binds to the exterior of the filament while single-stranded (ss)DNA is stabiized in the filament's interior. The ATP-DnaA-oriC complex binds and stabilizes one strand of the AT-rich DNA unwinding element (DUE), permitting loading of DNA polymerase. After initiation quickly degrades to an ADP-DnaA complex that is not apt for DNA replication. Binds acidic phospholipids. In Streptomyces griseus subsp. griseus (strain JCM 4626 / CBS 651.72 / NBRC 13350 / KCC S-0626 / ISP 5235), this protein is Chromosomal replication initiator protein DnaA.